We begin with the raw amino-acid sequence, 524 residues long: Dihydromonacolin L monooxygenase mokC (524 aa).

Residues Met-1–Pro-25 lie on the Cytoplasmic side of the membrane. Residues Trp-26–Tyr-47 traverse the membrane as a helical; Signal-anchor for type II membrane protein segment. Over Ser-48–Leu-524 the chain is Lumenal. N-linked (GlcNAc...) asparagine glycans are attached at residues Asn-396 and Asn-401. Heme is bound at residue Cys-467.

The protein belongs to the cytochrome P450 family. The cofactor is heme.

Its subcellular location is the endoplasmic reticulum membrane. The catalysed reaction is dihydromonacolin L carboxylate + reduced [NADPH--hemoprotein reductase] + O2 = monacolin L carboxylate + oxidized [NADPH--hemoprotein reductase] + 2 H2O + H(+). The enzyme catalyses monacolin L carboxylate + reduced [NADPH--hemoprotein reductase] + O2 = monacolin J carboxylate + oxidized [NADPH--hemoprotein reductase] + H2O + H(+). The protein operates within polyketide biosynthesis; lovastatin biosynthesis. Cytochrome P450 monooxygenase; part of the gene cluster that mediates the biosynthesis of monakolin K, also known as lovastatin, and which acts as a potent competitive inhibitor of HMG-CoA reductase. Monakolin K biosynthesis is performed in two stages. The first stage is catalyzed by the nonaketide synthase mokA, which belongs to type I polyketide synthases and catalyzes the iterative nine-step formation of the polyketide. This PKS stage is completed by the action of dehydrogenase mokE, which catalyzes the NADPH-dependent reduction of the unsaturated tetra-, penta- and heptaketide intermediates that arise during the mokA-mediated biosynthesis of the nonaketide chain and leads to dihydromonacolin L. Covalently bound dihydromonacolin L is released from mokA by the mokD esterase. Conversion of dihydromonacolin L into monacolin L and then monacolin J is subsequently performed with the participation of molecular oxygen and P450 monoogygenase mokC. Finally, mokF performs the conversion of monacoline J to monacoline K through the addition of the side-chain diketide moiety (2R)-2-methylbutanoate produced by the diketide synthase mokB. The sequence is that of Dihydromonacolin L monooxygenase mokC from Monascus pilosus (Red mold).